Here is a 467-residue protein sequence, read N- to C-terminus: Replication factor A 51 kDa subunit (467 aa).

The OB DNA-binding region spans 23–105 (WWIRARVADK…SNVNNDYELT (83 aa)). The C4-type zinc-finger motif lies at 313–335 (CPTCNKKVTEEGAQGDRFRCEKC).

Belongs to the replication factor A protein 1 family. Component of the heterotrimeric canonical replication protein A complex (RPA). The N-terminus is blocked.

It is found in the nucleus. Its function is as follows. As part of the heterotrimeric replication protein A complex (RPA/RP-A), binds and stabilizes single-stranded DNA intermediates, that form during DNA replication or upon DNA stress. It prevents their reannealing and in parallel, recruits and activates different proteins and complexes involved in DNA metabolism. Thereby, it plays an essential role both in DNA replication and the cellular response to DNA damage. This is Replication factor A 51 kDa subunit (RPA1) from Crithidia fasciculata.